An 82-amino-acid chain; its full sequence is Putative antitoxin RelB1 (82 aa).

Functionally, antitoxin component of a type II toxin-antitoxin (TA) system. Its cognate toxin is RelE1 (Potential). The sequence is that of Putative antitoxin RelB1 (relB1) from Methanocaldococcus jannaschii (strain ATCC 43067 / DSM 2661 / JAL-1 / JCM 10045 / NBRC 100440) (Methanococcus jannaschii).